A 250-amino-acid polypeptide reads, in one-letter code: 5'-nucleotidase SurE (250 aa).

Positions 8, 9, 39, and 95 each coordinate a divalent metal cation.

The protein belongs to the SurE nucleotidase family. A divalent metal cation is required as a cofactor.

Its subcellular location is the cytoplasm. It carries out the reaction a ribonucleoside 5'-phosphate + H2O = a ribonucleoside + phosphate. Its function is as follows. Nucleotidase that shows phosphatase activity on nucleoside 5'-monophosphates. The chain is 5'-nucleotidase SurE from Syntrophobacter fumaroxidans (strain DSM 10017 / MPOB).